Consider the following 147-residue polypeptide: MSMSTSTEVIAHHWAFAIFLIVAIGLCCLMLVGGWFLGGRARARHKNVPFESGIDSVGTARLRLSAKFYLVAMFFVIFDVEALYLFAWSTSIRESGWVGFVEAAIFIFVLLAGLVYLARIGALDWTPARSRRERMNPETNSIANRQR.

3 helical membrane-spanning segments follow: residues 16-36, 68-88, and 97-117; these read FAIFLIVAIGLCCLMLVGGWF, FYLVAMFFVIFDVEALYLFAW, and WVGFVEAAIFIFVLLAGLVYL.

This sequence belongs to the complex I subunit 3 family. NDH-1 is composed of 13 different subunits. Subunits NuoA, H, J, K, L, M, N constitute the membrane sector of the complex.

The protein resides in the cell inner membrane. It catalyses the reaction a quinone + NADH + 5 H(+)(in) = a quinol + NAD(+) + 4 H(+)(out). Its function is as follows. NDH-1 shuttles electrons from NADH, via FMN and iron-sulfur (Fe-S) centers, to quinones in the respiratory chain. The immediate electron acceptor for the enzyme in this species is believed to be ubiquinone. Couples the redox reaction to proton translocation (for every two electrons transferred, four hydrogen ions are translocated across the cytoplasmic membrane), and thus conserves the redox energy in a proton gradient. This is NADH-quinone oxidoreductase subunit A from Salmonella paratyphi A (strain ATCC 9150 / SARB42).